A 504-amino-acid polypeptide reads, in one-letter code: ATP-dependent RNA helicase DBP3 (504 aa).

Basic and acidic residues predominate over residues 1-14; that stretch reads MSKDELKDKKRKVE. Residues 1 to 65 form a disordered region; that stretch reads MSKDELKDKK…KSETESFAAS (65 aa). Over residues 20–53 the composition is skewed to basic residues; the sequence is SKKKLKKDKKDKKDKKDKKDKKDKKEKKEKKEKK. The Q motif signature appears at 94–120; it reads LDFSQVSFIDQIQKEISKFPKPTPIQA. One can recognise a Helicase ATP-binding domain in the interval 123–296; sequence WPYLLAGKDV…SSFMSEPVKV (174 aa). 136–143 provides a ligand contact to ATP; the sequence is AETGSGKT. A DEAD box motif is present at residues 243-246; sequence DEAD. Residues 325-474 form the Helicase C-terminal domain; the sequence is KLLELLKKYH…PVPEELKKFG (150 aa).

It belongs to the DEAD box helicase family. DDX5/DBP2 subfamily.

The protein localises to the nucleus. Its subcellular location is the nucleolus. The enzyme catalyses ATP + H2O = ADP + phosphate + H(+). Its function is as follows. ATP-dependent RNA helicase required for 60S ribosomal subunit synthesis. Involved in efficient pre-rRNA processing, predominantly at site A3, which is necessary for the normal formation of 25S and 5.8S rRNAs. The chain is ATP-dependent RNA helicase DBP3 (DBP3) from Kluyveromyces lactis (strain ATCC 8585 / CBS 2359 / DSM 70799 / NBRC 1267 / NRRL Y-1140 / WM37) (Yeast).